The chain runs to 163 residues: Iron-sulfur cluster assembly protein 2 (163 aa).

The transit peptide at methionine 1–aspartate 48 directs the protein to the mitochondrion.

This sequence belongs to the NifU family. Component of the core Fe-S cluster (ISC) assembly machinery. Requires [2Fe-2S] cluster as cofactor. As to expression, mostly expressed in leaves, pollen and flowers.

The protein resides in the mitochondrion matrix. It functions in the pathway cofactor biosynthesis; iron-sulfur cluster biosynthesis. Its function is as follows. Scaffold protein for the de novo synthesis of iron-sulfur (Fe-S) clusters within mitochondria, which is required for maturation of both mitochondrial and cytoplasmic [2Fe-2S] and [4Fe-4S] proteins. First, a [2Fe-2S] cluster is transiently assembled on the scaffold protein ISCU (ISU1, ISU2 or ISU3). In a second step, the cluster is released from ISCU, transferred to a glutaredoxin, followed by the formation of mitochondrial [2Fe-2S] proteins, the synthesis of [4Fe-4S] clusters and their target-specific insertion into the recipient apoproteins. Cluster assembly on ISCU depends on the function of the cysteine desulfurase complex NFS1-ISD11, which serves as the sulfur donor for cluster synthesis, the iron-binding protein frataxin as the putative iron donor, and the electron transfer chain comprised of ferredoxin reductase and ferredoxin, which receive their electrons from NADH. This Arabidopsis thaliana (Mouse-ear cress) protein is Iron-sulfur cluster assembly protein 2 (ISU2).